The primary structure comprises 376 residues: Queuine tRNA-ribosyltransferase (376 aa).

The Proton acceptor role is filled by Asp93. Substrate contacts are provided by residues 93 to 97, Asp147, Gln191, and Gly218; that span reads DSGGF. The tract at residues 249–255 is RNA binding; sequence GVGKPED. Asp268 serves as the catalytic Nucleophile. An RNA binding; important for wobble base 34 recognition region spans residues 273-277; it reads TRNAR. Residues Cys306, Cys308, Cys311, and His337 each contribute to the Zn(2+) site.

The protein belongs to the queuine tRNA-ribosyltransferase family. Homodimer. Within each dimer, one monomer is responsible for RNA recognition and catalysis, while the other monomer binds to the replacement base PreQ1. It depends on Zn(2+) as a cofactor.

It catalyses the reaction 7-aminomethyl-7-carbaguanine + guanosine(34) in tRNA = 7-aminomethyl-7-carbaguanosine(34) in tRNA + guanine. Its pathway is tRNA modification; tRNA-queuosine biosynthesis. Catalyzes the base-exchange of a guanine (G) residue with the queuine precursor 7-aminomethyl-7-deazaguanine (PreQ1) at position 34 (anticodon wobble position) in tRNAs with GU(N) anticodons (tRNA-Asp, -Asn, -His and -Tyr). Catalysis occurs through a double-displacement mechanism. The nucleophile active site attacks the C1' of nucleotide 34 to detach the guanine base from the RNA, forming a covalent enzyme-RNA intermediate. The proton acceptor active site deprotonates the incoming PreQ1, allowing a nucleophilic attack on the C1' of the ribose to form the product. After dissociation, two additional enzymatic reactions on the tRNA convert PreQ1 to queuine (Q), resulting in the hypermodified nucleoside queuosine (7-(((4,5-cis-dihydroxy-2-cyclopenten-1-yl)amino)methyl)-7-deazaguanosine). This is Queuine tRNA-ribosyltransferase from Histophilus somni (strain 129Pt) (Haemophilus somnus).